The chain runs to 611 residues: MPKRVADEIAALPEPRGPLRRPCADLSRRVRLLAPLLDHLPASSSSSSSTPLADALGAARDLLRKTRDGSKIDQAMRGDAFLDEFAGVNRQIHLALDALPYNTFHMPQEVQEQVALVHSQFQRASTRTDPPDTQLSMDLAWALTDNPSDPALLTRISHKLQLHTMADMKNESIALHNMVISTAGEPDGCVDQMSSLLKKLKDCVVTEDHANDALTTRSASIKHRSPIIPDEFRCPISLELMQDPVIVSSGQTYERSCIQKWLDSGHKTCPKTQQPLSHTSLTPNFVLKSLISQWCEANGIELPKNKQNSRDKKAAKSSDYDHAGLVSLMNRLRSGNQDEQRAAAGEIRLLAKRNVNNRICIAEAGAIPLLVNLLSSSDPRTQEHAVTALLNLSIHENNKASIVDSHAIPKIVEVLKTGSMETRENAAATLFSLSVVDENKVTIGAAGAIPPLINLLCDGSPRGKKDAATAIFNLCIYQGNKVRAVKAGIVIHLMNFLVDPTGGMIDEALSLLSILAGNPEGKIVIARSEPIPPLVEVIKTGSPRNRENAAAILWLLCSADTEQTLAAKAAGVEDALKELSETGTDRAKRKASSILELMHQANEDSLKGNGH.

Residues 227–301 enclose the U-box domain; that stretch reads IIPDEFRCPI…SQWCEANGIE (75 aa). ARM repeat units lie at residues 355–394, 396–435, 437–476, and 478–517; these read VNNR…NLSI, ENNK…SLSV, DENK…NLCI, and QGNK…ILAG.

The catalysed reaction is S-ubiquitinyl-[E2 ubiquitin-conjugating enzyme]-L-cysteine + [acceptor protein]-L-lysine = [E2 ubiquitin-conjugating enzyme]-L-cysteine + N(6)-ubiquitinyl-[acceptor protein]-L-lysine.. It participates in protein modification; protein ubiquitination. Functionally, possesses E3 ubiquitin-protein ligase in vitro. This is U-box domain-containing protein 12 (PUB12) from Oryza sativa subsp. japonica (Rice).